The primary structure comprises 677 residues: Protein hook (677 aa).

Residues 6 to 123 enclose the Calponin-homology (CH) domain; that stretch reads NEMYYSLLEW…RLLQLVLGCA (118 aa). Coiled-coil stretches lie at residues 135–436 and 478–588; these read EIMC…KCGH and QTAL…AKEV.

It belongs to the hook family. As to quaternary structure, homodimer. Interacts with microtubules via its N-terminus.

It localises to the cytoplasm. The protein localises to the cytoskeleton. The protein resides in the endosome. It is found in the synapse. In terms of biological role, involved in endocytic trafficking by stabilizing organelles of the endocytic pathway. Probably acts as a cytoskeletal linker protein required to tether endosome vesicles to the cytoskeleton. Involved in modulation of endocytosis at stages required for down-regulation of membrane proteins that control synapse size. Not involved in synaptic vesicle recycling. Required in R7 cells for boss endocytosis into multivesicular bodies (MVBs). Has a role in regulating adult longevity. This is Protein hook from Drosophila pseudoobscura pseudoobscura (Fruit fly).